Reading from the N-terminus, the 211-residue chain is Endoplasmic reticulum vesicle protein 25 (211 aa).

The signal sequence occupies residues 1-19 (MKSIVSVLTLLLLINAVAA). Residues 20 to 180 (LRFVLPAKDK…TNESTNRRVK (161 aa)) are Lumenal-facing. The GOLD domain maps to 33-121 (PFCVRDFVKN…TKEIDLSVAI (89 aa)). The helical transmembrane segment at 181–201 (FFSVGITLALIALGVWQIIYL) threads the bilayer. At 202-211 (RSYFRSKHII) the chain is on the cytoplasmic side.

Belongs to the EMP24/GP25L family.

Its subcellular location is the endoplasmic reticulum membrane. The protein localises to the golgi apparatus membrane. Its function is as follows. Constituent of COPII-coated endoplasmic reticulum-derived transport vesicles. Required for efficient transport of a subset of secretory proteins to the Golgi. Facilitates retrograde transport from the Golgi to the endoplasmic reticulum. In Yarrowia lipolytica (strain CLIB 122 / E 150) (Yeast), this protein is Endoplasmic reticulum vesicle protein 25 (ERV25).